The sequence spans 415 residues: Probable peptidoglycan glycosyltransferase FtsW (415 aa).

The next 11 membrane-spanning stretches (helical) occupy residues 31–51 (PILM…VTSA), 63–83 (FFFV…TVWL), 97–117 (LWIL…GIGH), 133–153 (IQVS…YIAT), 162–182 (ITGM…LLLQ), 185–205 (FGTT…ARAQ), 206–226 (WQMM…VVLS), 245–265 (FGHG…GVWG), 285–305 (FIFA…LIGL), 326–346 (IAGA…ALIN), and 361–381 (LPLM…LGFL).

This sequence belongs to the SEDS family. FtsW subfamily.

It is found in the cell inner membrane. It catalyses the reaction [GlcNAc-(1-&gt;4)-Mur2Ac(oyl-L-Ala-gamma-D-Glu-L-Lys-D-Ala-D-Ala)](n)-di-trans,octa-cis-undecaprenyl diphosphate + beta-D-GlcNAc-(1-&gt;4)-Mur2Ac(oyl-L-Ala-gamma-D-Glu-L-Lys-D-Ala-D-Ala)-di-trans,octa-cis-undecaprenyl diphosphate = [GlcNAc-(1-&gt;4)-Mur2Ac(oyl-L-Ala-gamma-D-Glu-L-Lys-D-Ala-D-Ala)](n+1)-di-trans,octa-cis-undecaprenyl diphosphate + di-trans,octa-cis-undecaprenyl diphosphate + H(+). The protein operates within cell wall biogenesis; peptidoglycan biosynthesis. In terms of biological role, peptidoglycan polymerase that is essential for cell division. This is Probable peptidoglycan glycosyltransferase FtsW from Halothiobacillus neapolitanus (strain ATCC 23641 / c2) (Thiobacillus neapolitanus).